A 470-amino-acid chain; its full sequence is Alpha-1A adrenergic receptor (470 aa).

Residues Met1–Val27 are Extracellular-facing. 2 N-linked (GlcNAc...) asparagine glycosylation sites follow: Asn9 and Asn12. Residues Val28–Val51 form a helical membrane-spanning segment. The Cytoplasmic segment spans residues Val52–Phe64. A helical membrane pass occupies residues Ile65–Ile88. Residues Leu89 to Cys99 lie on the Extracellular side of the membrane. The cysteines at positions 99 and 176 are disulfide-linked. Residues Asn100–Val122 traverse the membrane as a helical segment. Topologically, residues Asp123–Ala143 are cytoplasmic. Residues Leu144–Glu167 form a helical membrane-spanning segment. Topologically, residues Pro168 to Glu181 are extracellular. The helical transmembrane segment at Pro182–Cys205 threads the bilayer. Residues Arg206–Thr271 are Cytoplasmic-facing. Residues Leu272–Ile295 form a helical membrane-spanning segment. Over Phe296–Asp303 the chain is Extracellular. A helical transmembrane segment spans residues Thr304 to Ser327. The Cytoplasmic portion of the chain corresponds to Asn328–Val470. Cys343 carries the S-palmitoyl cysteine lipid modification. The segment at Gly375–Glu416 is disordered. The span at Ser381 to Pro392 shows a compositional bias: polar residues.

It belongs to the G-protein coupled receptor 1 family. Adrenergic receptor subfamily. ADRA1A sub-subfamily.

The protein resides in the cell membrane. Its function is as follows. This alpha-adrenergic receptor mediates its action by association with G proteins that activate a phosphatidylinositol-calcium second messenger system. This chain is Alpha-1A adrenergic receptor (adra1a), found in Oryzias latipes (Japanese rice fish).